Reading from the N-terminus, the 71-residue chain is Small ribosomal subunit protein bS21 (71 aa).

Belongs to the bacterial ribosomal protein bS21 family.

This Psychromonas ingrahamii (strain DSM 17664 / CCUG 51855 / 37) protein is Small ribosomal subunit protein bS21.